The sequence spans 173 residues: uncharacterized protein (173 aa).

3 helical membrane-spanning segments follow: residues 24–44, 82–102, and 135–155; these read VAFIAIPISQFCFFNLLWLFF, YILFNILIFATNILVICSYFI, and LIKRFLAYITFPIGIFFILFS.

It is found in the cell membrane. This is an uncharacterized protein from Rickettsia prowazekii (strain Madrid E).